The primary structure comprises 194 residues: Peptidyl-tRNA hydrolase (194 aa).

Tyr-16 is a tRNA binding site. Catalysis depends on His-21, which acts as the Proton acceptor. TRNA is bound by residues Phe-67, Asn-69, and Asn-115.

This sequence belongs to the PTH family. In terms of assembly, monomer.

The protein resides in the cytoplasm. The catalysed reaction is an N-acyl-L-alpha-aminoacyl-tRNA + H2O = an N-acyl-L-amino acid + a tRNA + H(+). Its function is as follows. Hydrolyzes ribosome-free peptidyl-tRNAs (with 1 or more amino acids incorporated), which drop off the ribosome during protein synthesis, or as a result of ribosome stalling. Functionally, catalyzes the release of premature peptidyl moieties from peptidyl-tRNA molecules trapped in stalled 50S ribosomal subunits, and thus maintains levels of free tRNAs and 50S ribosomes. This is Peptidyl-tRNA hydrolase from Shigella flexneri.